Here is a 119-residue protein sequence, read N- to C-terminus: Large ribosomal subunit protein bL20 (119 aa).

The protein belongs to the bacterial ribosomal protein bL20 family.

In terms of biological role, binds directly to 23S ribosomal RNA and is necessary for the in vitro assembly process of the 50S ribosomal subunit. It is not involved in the protein synthesizing functions of that subunit. In Stenotrophomonas maltophilia (strain K279a), this protein is Large ribosomal subunit protein bL20.